We begin with the raw amino-acid sequence, 112 residues long: Large ribosomal subunit protein eL30y (112 aa).

It belongs to the eukaryotic ribosomal protein eL30 family.

The sequence is that of Large ribosomal subunit protein eL30y (RPL30B) from Arabidopsis thaliana (Mouse-ear cress).